Reading from the N-terminus, the 482-residue chain is UDP-N-acetylmuramate--L-alanine ligase (482 aa).

115 to 121 (GTHGKTT) is an ATP binding site.

It belongs to the MurCDEF family.

Its subcellular location is the cytoplasm. It carries out the reaction UDP-N-acetyl-alpha-D-muramate + L-alanine + ATP = UDP-N-acetyl-alpha-D-muramoyl-L-alanine + ADP + phosphate + H(+). The protein operates within cell wall biogenesis; peptidoglycan biosynthesis. Cell wall formation. The sequence is that of UDP-N-acetylmuramate--L-alanine ligase from Rhodospirillum centenum (strain ATCC 51521 / SW).